We begin with the raw amino-acid sequence, 64 residues long: Putative H/ACA ribonucleoprotein complex subunit 3 (64 aa).

It belongs to the NOP10 family. In terms of assembly, component of the small nucleolar ribonucleoprotein particles containing H/ACA-type snoRNAs (H/ACA snoRNPs).

Its subcellular location is the nucleus. It localises to the nucleolus. Its function is as follows. Required for ribosome biogenesis. Part of a complex which catalyzes pseudouridylation of rRNA. This involves the isomerization of uridine such that the ribose is subsequently attached to C5, instead of the normal N1. Pseudouridine ('psi') residues may serve to stabilize the conformation of rRNAs. The protein is Putative H/ACA ribonucleoprotein complex subunit 3 (nola-3) of Caenorhabditis elegans.